We begin with the raw amino-acid sequence, 335 residues long: Rho guanine nucleotide exchange factor 39 (335 aa).

One can recognise a DH domain in the interval 22-197; it reads KRACTARELL…SETAQRVHTI (176 aa). The PH domain occupies 227 to 331; that stretch reads WFLRQGWLLV…WYHSLTLAIS (105 aa).

It is found in the cell membrane. Functionally, promotes cell proliferation. The chain is Rho guanine nucleotide exchange factor 39 (ARHGEF39) from Bos taurus (Bovine).